The chain runs to 859 residues: Leucine--tRNA ligase (859 aa).

Positions 42 to 52 match the 'HIGH' region motif; sequence PYPSGRLHMGH. A 'KMSKS' region motif is present at residues 618-622; that stretch reads KMSKS. Residue Lys-621 participates in ATP binding.

It belongs to the class-I aminoacyl-tRNA synthetase family.

Its subcellular location is the cytoplasm. The catalysed reaction is tRNA(Leu) + L-leucine + ATP = L-leucyl-tRNA(Leu) + AMP + diphosphate. In Shewanella baltica (strain OS155 / ATCC BAA-1091), this protein is Leucine--tRNA ligase.